Here is a 200-residue protein sequence, read N- to C-terminus: Lipopolysaccharide core heptose(II)-phosphate phosphatase (200 aa).

A signal peptide spans 1–25; the sequence is MLAFCRSSLKSKKYFIILLALAAIA.

This sequence belongs to the phosphoglycerate mutase family. Ais subfamily.

The protein resides in the periplasm. It functions in the pathway bacterial outer membrane biogenesis; lipopolysaccharide metabolism. Its function is as follows. Catalyzes the dephosphorylation of heptose(II) of the outer membrane lipopolysaccharide core. The polypeptide is Lipopolysaccharide core heptose(II)-phosphate phosphatase (Escherichia coli O9:H4 (strain HS)).